Reading from the N-terminus, the 409-residue chain is Elongation factor Tu, chloroplastic (409 aa).

Residues 10–214 form the tr-type G domain; that stretch reads KPHVNIGTIG…AVDTYIPTPE (205 aa). A G1 region spans residues 19-26; it reads GHVDHGKT. 19 to 26 is a GTP binding site; it reads GHVDHGKT. Thr-26 contacts Mg(2+). The G2 stretch occupies residues 60–64; it reads GITIN. The G3 stretch occupies residues 81–84; it reads DCPG. Residues 81–85 and 136–139 contribute to the GTP site; these read DCPGH and NKED. The tract at residues 136-139 is G4; the sequence is NKED. The G5 stretch occupies residues 174 to 176; the sequence is SAL.

It belongs to the TRAFAC class translation factor GTPase superfamily. Classic translation factor GTPase family. EF-Tu/EF-1A subfamily.

The protein resides in the plastid. Its subcellular location is the chloroplast. The catalysed reaction is GTP + H2O = GDP + phosphate + H(+). In terms of biological role, GTP hydrolase that promotes the GTP-dependent binding of aminoacyl-tRNA to the A-site of ribosomes during protein biosynthesis. This Pyropia yezoensis (Susabi-nori) protein is Elongation factor Tu, chloroplastic (tufA).